We begin with the raw amino-acid sequence, 201 residues long: Small ribosomal subunit protein uS4 (201 aa).

A disordered region spans residues 1–38; sequence MARYTGPATRKSRRLGVDLVGGDQSFEKRPYPPGQHGR. One can recognise an S4 RNA-binding domain in the interval 91–157; it reads SRLDNVVYRA…DPFVIARETA (67 aa).

This sequence belongs to the universal ribosomal protein uS4 family. In terms of assembly, part of the 30S ribosomal subunit. Contacts protein S5. The interaction surface between S4 and S5 is involved in control of translational fidelity.

Functionally, one of the primary rRNA binding proteins, it binds directly to 16S rRNA where it nucleates assembly of the body of the 30S subunit. In terms of biological role, with S5 and S12 plays an important role in translational accuracy. This is Small ribosomal subunit protein uS4 from Mycobacterium sp. (strain JLS).